The sequence spans 146 residues: Peptidyl-lysine N-acetyltransferase YiaC (146 aa).

Positions 1–143 (MIREAQRSEL…PTWIMSWPVV (143 aa)) constitute an N-acetyltransferase domain.

Belongs to the acetyltransferase family.

It carries out the reaction L-lysyl-[protein] + acetyl-CoA = N(6)-acetyl-L-lysyl-[protein] + CoA + H(+). Its function is as follows. N-epsilon-lysine acetyltransferase that catalyzes acetylation of a large number of proteins. Overexpression inhibits motility. This is Peptidyl-lysine N-acetyltransferase YiaC (yiaC) from Escherichia coli (strain K12).